The sequence spans 152 residues: Deoxyuridine 5'-triphosphate nucleotidohydrolase (152 aa).

Substrate contacts are provided by residues 62 to 64, Asn-75, and 79 to 81; these read RSG and TVD.

It belongs to the dUTPase family. It depends on Mg(2+) as a cofactor.

The catalysed reaction is dUTP + H2O = dUMP + diphosphate + H(+). Its pathway is pyrimidine metabolism; dUMP biosynthesis; dUMP from dCTP (dUTP route): step 2/2. This enzyme is involved in nucleotide metabolism: it produces dUMP, the immediate precursor of thymidine nucleotides and it decreases the intracellular concentration of dUTP so that uracil cannot be incorporated into DNA. The polypeptide is Deoxyuridine 5'-triphosphate nucleotidohydrolase (Leifsonia xyli subsp. xyli (strain CTCB07)).